A 98-amino-acid polypeptide reads, in one-letter code: Defensin-B (98 aa).

A signal peptide spans Met1 to Ala20. A propeptide spanning residues Tyr21–Arg58 is cleaved from the precursor. 3 cysteine pairs are disulfide-bonded: Cys61–Cys88, Cys74–Cys94, and Cys78–Cys96.

This sequence belongs to the invertebrate defensin family. Type 1 subfamily.

Its subcellular location is the secreted. Its function is as follows. Antibacterial peptide mostly active against Gram-positive bacteria. The chain is Defensin-B (DEFB) from Aedes aegypti (Yellowfever mosquito).